The sequence spans 261 residues: Imidazole glycerol phosphate synthase subunit HisF (261 aa).

Residues D12 and D131 contribute to the active site.

Belongs to the HisA/HisF family. In terms of assembly, heterodimer of HisH and HisF.

The protein resides in the cytoplasm. It catalyses the reaction 5-[(5-phospho-1-deoxy-D-ribulos-1-ylimino)methylamino]-1-(5-phospho-beta-D-ribosyl)imidazole-4-carboxamide + L-glutamine = D-erythro-1-(imidazol-4-yl)glycerol 3-phosphate + 5-amino-1-(5-phospho-beta-D-ribosyl)imidazole-4-carboxamide + L-glutamate + H(+). The protein operates within amino-acid biosynthesis; L-histidine biosynthesis; L-histidine from 5-phospho-alpha-D-ribose 1-diphosphate: step 5/9. Its function is as follows. IGPS catalyzes the conversion of PRFAR and glutamine to IGP, AICAR and glutamate. The HisF subunit catalyzes the cyclization activity that produces IGP and AICAR from PRFAR using the ammonia provided by the HisH subunit. This is Imidazole glycerol phosphate synthase subunit HisF from Brucella abortus (strain S19).